Reading from the N-terminus, the 602-residue chain is Protein indeterminate-domain 5, chloroplastic (602 aa).

2 stretches are compositionally biased toward low complexity: residues M1 to S10 and H21 to A30. A chloroplast-targeting transit peptide spans M1–P50. Positions M1 to A65 are disordered. Residues A31–A48 show a composition bias toward pro residues. T60 bears the Phosphothreonine mark. At S71 the chain carries Phosphoserine. 2 C2H2-type zinc fingers span residues F81–H103 and Y122–H152. Residues W157 to G180 form a C2H2-type 2; degenerate zinc finger. Positions 159, 162, 175, 179, 186, 188, 201, and 205 each coordinate Zn(2+). The CCHC-type 2; atypical zinc finger occupies Y184–A207. The tract at residues R194–D206 is SHR-binding. Disordered stretches follow at residues K443–S467 and K537–F602. Composition is skewed to low complexity over residues G448–S467, Q546–Q560, and S570–S579.

As to quaternary structure, binds to RGA and SCL3 competitively. In terms of tissue distribution, highly expressed in leaf tissues.

It localises to the plastid. It is found in the chloroplast. Functionally, transcription factor acting as a positive regulator of the starch synthase SS4. Controls chloroplast development and starch granule formation. Binds DNA via its zinc fingers. Recognizes and binds to SCL3 promoter sequence 5'-AGACAA-3' to promote its expression when in complex with RGA. In Arabidopsis thaliana (Mouse-ear cress), this protein is Protein indeterminate-domain 5, chloroplastic.